A 191-amino-acid chain; its full sequence is Cell division protein SepF (191 aa).

Residues 1–77 (MEGQDDYQLL…MGSNVIGLPG (77 aa)) form a disordered region.

This sequence belongs to the SepF family. Homodimer. Interacts with FtsZ.

It localises to the cytoplasm. Functionally, cell division protein that is part of the divisome complex and is recruited early to the Z-ring. Probably stimulates Z-ring formation, perhaps through the cross-linking of FtsZ protofilaments. Its function overlaps with FtsA. The sequence is that of Cell division protein SepF from Synechococcus sp. (strain JA-2-3B'a(2-13)) (Cyanobacteria bacterium Yellowstone B-Prime).